We begin with the raw amino-acid sequence, 330 residues long: MKTAYIAKQRQISFVKSHFSRQLEERLGLIEVQAPILSRVGDGTQDNLSGCEKAVQVKVKALPDAQFEVVHSLAKWKRQTLGQHDFSAGEGLYTHMKALRPDEDRLSPLHSVYVDQWDWERVMGDGERQFSTLKSTVEAIWAGIKATEAEVHKQFGLAPFLPDQIHFVHSQELLARFPDLDAKGRERAIAKELGAVFLVGIGGKLSDGRRHDVRAPDYDDWSSASELGYAGLNGDILVWNPVLEDAFELSSMGIRVDADTLMRQLALTGDEDRLQLEWHQALLRGEMPQTIGGGIGQSRLTMLLLQLPHIGQVQCGVWPAQVRESIPAIL.

This sequence belongs to the class-II aminoacyl-tRNA synthetase family. AsnA subfamily. As to quaternary structure, homodimer.

Its subcellular location is the cytoplasm. The enzyme catalyses L-aspartate + NH4(+) + ATP = L-asparagine + AMP + diphosphate + H(+). Its pathway is amino-acid biosynthesis; L-asparagine biosynthesis; L-asparagine from L-aspartate (ammonia route): step 1/1. The sequence is that of Aspartate--ammonia ligase from Salmonella typhi.